Here is a 549-residue protein sequence, read N- to C-terminus: Hydroxylamine reductase (549 aa).

[4Fe-4S] cluster-binding residues include Cys5, Cys8, Cys17, and Cys23. His243, Glu267, Cys311, Cys403, Cys431, Cys456, Glu491, and Lys493 together coordinate hybrid [4Fe-2O-2S] cluster. Cys403 carries the post-translational modification Cysteine persulfide.

The protein belongs to the HCP family. Requires [4Fe-4S] cluster as cofactor. Hybrid [4Fe-2O-2S] cluster is required as a cofactor.

It localises to the cytoplasm. It carries out the reaction A + NH4(+) + H2O = hydroxylamine + AH2 + H(+). In terms of biological role, catalyzes the reduction of hydroxylamine to form NH(3) and H(2)O. The sequence is that of Hydroxylamine reductase from Desulfitobacterium hafniense (strain Y51).